The chain runs to 84 residues: Toxin Aah4 (84 aa).

The N-terminal stretch at 1 to 19 is a signal peptide; the sequence is MNYLIMFSLALLLVIGVES. The 62-residue stretch at 21-82 folds into the LCN-type CS-alpha/beta domain; that stretch reads RDGYIVDSKN…PIKDPSDDCH (62 aa). Disulfide bonds link C31–C81, C35–C53, C39–C63, and C43–C65. Residue R84 is a propeptide, removed by a carboxypeptidase.

It belongs to the long (4 C-C) scorpion toxin superfamily. Sodium channel inhibitor family. Alpha subfamily. As to expression, expressed by the venom gland.

Its subcellular location is the secreted. In terms of biological role, alpha toxins bind voltage-independently at site-3 of sodium channels (Nav) and inhibit the inactivation of the activated channels, thereby blocking neuronal transmission. This toxin seems to specifically act on Nav1.6/SCN8A sodium channel. In vitro, it inhibits the proliferation of the prostate cancer cell line DU145 (IC(50)=15 uM). It shows low effect on the adhesion of DU145 cells to fibronectin (at 15 uM) and is inactive on DU145 cells migration. This is Toxin Aah4 from Androctonus australis (Sahara scorpion).